The chain runs to 233 residues: Small ribosomal subunit protein uS3 (233 aa).

The KH type-2 domain occupies 39 to 107; that stretch reads VRQFLTKELS…PAQINTYEIR (69 aa).

Belongs to the universal ribosomal protein uS3 family. Part of the 30S ribosomal subunit. Forms a tight complex with proteins S10 and S14.

Its function is as follows. Binds the lower part of the 30S subunit head. Binds mRNA in the 70S ribosome, positioning it for translation. The chain is Small ribosomal subunit protein uS3 from Hamiltonella defensa subsp. Acyrthosiphon pisum (strain 5AT).